The primary structure comprises 571 residues: Proline--tRNA ligase (571 aa).

Belongs to the class-II aminoacyl-tRNA synthetase family. ProS type 1 subfamily. Homodimer.

It is found in the cytoplasm. It catalyses the reaction tRNA(Pro) + L-proline + ATP = L-prolyl-tRNA(Pro) + AMP + diphosphate. Functionally, catalyzes the attachment of proline to tRNA(Pro) in a two-step reaction: proline is first activated by ATP to form Pro-AMP and then transferred to the acceptor end of tRNA(Pro). As ProRS can inadvertently accommodate and process non-cognate amino acids such as alanine and cysteine, to avoid such errors it has two additional distinct editing activities against alanine. One activity is designated as 'pretransfer' editing and involves the tRNA(Pro)-independent hydrolysis of activated Ala-AMP. The other activity is designated 'posttransfer' editing and involves deacylation of mischarged Ala-tRNA(Pro). The misacylated Cys-tRNA(Pro) is not edited by ProRS. This chain is Proline--tRNA ligase, found in Vibrio atlanticus (strain LGP32) (Vibrio splendidus (strain Mel32)).